The following is a 285-amino-acid chain: UPF0354 protein MW1686 (285 aa).

The protein belongs to the UPF0354 family.

The chain is UPF0354 protein MW1686 from Staphylococcus aureus (strain MW2).